The sequence spans 211 residues: Dephospho-CoA kinase (211 aa).

The DPCK domain maps to 3 to 206 (VLGLTGGIGS…PGMKGPDPHA (204 aa)). 11-16 (GSGKSI) lines the ATP pocket.

Belongs to the CoaE family.

The protein resides in the cytoplasm. The enzyme catalyses 3'-dephospho-CoA + ATP = ADP + CoA + H(+). It functions in the pathway cofactor biosynthesis; coenzyme A biosynthesis; CoA from (R)-pantothenate: step 5/5. Catalyzes the phosphorylation of the 3'-hydroxyl group of dephosphocoenzyme A to form coenzyme A. The sequence is that of Dephospho-CoA kinase from Syntrophotalea carbinolica (strain DSM 2380 / NBRC 103641 / GraBd1) (Pelobacter carbinolicus).